Reading from the N-terminus, the 329-residue chain is Isopenicillin N synthase (329 aa).

Positions 87, 91, and 189 each coordinate isopenicillin N. N-[(5S)-5-amino-5-carboxypentanoyl]-L-cysteinyl-D-valine-binding residues include Arg87, Tyr91, Tyr189, His212, and Asp214. The region spanning 180 to 286 (TLSAVTLIHY…RLSLPFFLHA (107 aa)) is the Fe2OG dioxygenase domain. The Fe(2+) site is built by His212, Asp214, and His268. Arg277 lines the 2-oxoglutarate pocket. Residue Ser279 coordinates isopenicillin N. Ser279 provides a ligand contact to N-[(5S)-5-amino-5-carboxypentanoyl]-L-cysteinyl-D-valine.

Belongs to the iron/ascorbate-dependent oxidoreductase family. Requires Fe cation as cofactor. L-ascorbate serves as cofactor.

It carries out the reaction N-[(5S)-5-amino-5-carboxypentanoyl]-L-cysteinyl-D-valine + O2 = isopenicillin N + 2 H2O. The protein operates within antibiotic biosynthesis; penicillin G biosynthesis; penicillin G from L-alpha-aminoadipate and L-cysteine and L-valine: step 2/3. Functionally, removes, in the presence of oxygen, 4 hydrogen atoms from delta-L-(alpha-aminoadipyl)-L-cysteinyl-D-valine (ACV) to form the azetidinone and thiazolidine rings of isopenicillin. In Streptomyces griseus, this protein is Isopenicillin N synthase (pcbC).